The following is a 475-amino-acid chain: Tetratricopeptide repeat protein 29 (475 aa).

TPR repeat units follow at residues 92 to 131 (DALR…EDAE), 136 to 173 (FEDV…AQLI), 182 to 215 (AEAH…TQGR), 234 to 267 (LRTY…AKEG), 274 to 307 (AEAS…STDL), 314 to 347 (GRGY…ARNN), and 354 to 387 (VRAS…TVEL). Residues 437 to 475 (IEPDPVTEEFRGSTVEAVSQNSERLEELSRFPGDQKNET) form a disordered region. A compositionally biased stretch (basic and acidic residues) spans 459-475 (ERLEELSRFPGDQKNET).

In terms of tissue distribution, expressed in spermatozoa (at protein level).

The protein localises to the cytoplasm. Its subcellular location is the cytoskeleton. It localises to the flagellum axoneme. Its function is as follows. Axonemal protein which is implicated in axonemal and/or peri-axonemal structure assembly and regulates flagellum assembly and beating and therefore sperm motility. The sequence is that of Tetratricopeptide repeat protein 29 (TTC29) from Homo sapiens (Human).